The primary structure comprises 166 residues: MDSLENLILVGVIKSCHGIKGHIILRSFTDPTVKITERELVNESGEKVNINLIKQNSKGELICQFNDISTRNEAANLKGYKLFCLRSSLPKLEEDEFYITDLNNLPILDNNHTEIGKIKNILNFGAGDIIEVEFLDKTTELLPFNKDFFPIITKDYAILNYKRDEL.

Positions 94 to 166 (EDEFYITDLN…AILNYKRDEL (73 aa)) constitute a PRC barrel domain.

Belongs to the RimM family. In terms of assembly, binds ribosomal protein uS19.

It is found in the cytoplasm. Functionally, an accessory protein needed during the final step in the assembly of 30S ribosomal subunit, possibly for assembly of the head region. Essential for efficient processing of 16S rRNA. May be needed both before and after RbfA during the maturation of 16S rRNA. It has affinity for free ribosomal 30S subunits but not for 70S ribosomes. The chain is Ribosome maturation factor RimM from Rickettsia bellii (strain RML369-C).